A 319-amino-acid chain; its full sequence is Transaldolase (319 aa).

The Schiff-base intermediate with substrate role is filled by Lys125.

This sequence belongs to the transaldolase family. Type 1 subfamily. In terms of assembly, homodimer.

It is found in the cytoplasm. It carries out the reaction D-sedoheptulose 7-phosphate + D-glyceraldehyde 3-phosphate = D-erythrose 4-phosphate + beta-D-fructose 6-phosphate. It participates in carbohydrate degradation; pentose phosphate pathway; D-glyceraldehyde 3-phosphate and beta-D-fructose 6-phosphate from D-ribose 5-phosphate and D-xylulose 5-phosphate (non-oxidative stage): step 2/3. Functionally, transaldolase is important for the balance of metabolites in the pentose-phosphate pathway. This chain is Transaldolase, found in Ralstonia pickettii (strain 12J).